The chain runs to 173 residues: T-cell receptor beta-2 chain C region (173 aa).

The interval 1–146 is c region; the sequence is EDLRNVTPPK…GVLSATILYE (146 aa). N-linked (GlcNAc...) asparagine glycans are attached at residues Asn-67 and Asn-116. A helical membrane pass occupies residues 147 to 168; that stretch reads ILLGKATLYAVLVSGLVLMAMV. Topologically, residues 169–173 are cytoplasmic; the sequence is KKKNS.

It is found in the membrane. The polypeptide is T-cell receptor beta-2 chain C region (Mus musculus (Mouse)).